Consider the following 120-residue polypeptide: MISKILIAACALLLISHLVLAVPYLEDGLNSLHNRTGESDETRGYTIQLLKEMPEDDAVEDYSADNLERLLQNTQKRSCIRRFGRCDHRPNDCCYNSSCRCNLWGSNCRCQRMGLFQKWG.

A signal peptide spans 1 to 21 (MISKILIAACALLLISHLVLA). Positions 22–63 (VPYLEDGLNSLHNRTGESDETRGYTIQLLKEMPEDDAVEDYS) are excised as a propeptide. 4 cysteine pairs are disulfide-bonded: cysteine 79/cysteine 94, cysteine 86/cysteine 99, cysteine 93/cysteine 110, and cysteine 101/cysteine 108.

Belongs to the xibalbin-1 family. As to expression, expressed by the venom gland. Not found in the whole body.

It localises to the secreted. In terms of biological role, probable neurotoxin. Strongly inhibits voltage-gated potassium channels (Kv1.1/KCNA1, Kv1.2/KCNA2, Kv1.3/KCNA3, and Kv1.6/KCNA6, with the highest toxicity against Kv1.6 (74% inhibition at 1 uM)) and mildly inhibits sodium channels (Nav1.2/SCN2A, Nav1.4/SCN4A, Nav1.5/SCN5A, Nav1.6/SCN8A, and BgNav). Induces activation of protein kinase A type II (PKA-II) and MAP kinase Erk1/2 in primary nociceptive and non-nociceptive sensory neurons. Does not show cytotoxic activity. Does not have an impact on Ca2+, cAMP, and NO signaling in the cell types analyzed. Does not interfere with the adhesion of leukocytes to endothelial cells. The polypeptide is Xibalbin-1 (Xibalbanus tulumensis (Blind cave remipede)).